The following is a 648-amino-acid chain: Dystrotelin (648 aa).

The ZZ-type zinc finger occupies 223–279 (QHRVHCHACKAFPITGLRYRCLKCLNVHLCQSCFLTERRSRKHKPSHSVLEYCTQPS). Residues cysteine 228, cysteine 231, cysteine 243, cysteine 246, cysteine 252, cysteine 255, histidine 265, and histidine 269 each contribute to the Zn(2+) site. Positions 367 to 446 (QRETAELQKD…LDTVRHLLSL (80 aa)) form a coiled coil. Positions 455-474 (SHSNLQLEQDGSINENNWTQ) are enriched in polar residues. Disordered regions lie at residues 455 to 509 (SHSN…DTLY) and 536 to 557 (QREE…EGLP). Residues 479–502 (KPHESSSTEHEVEERGTRQERRFE) are compositionally biased toward basic and acidic residues. Residues 538–548 (EEEELQEEEEG) are compositionally biased toward acidic residues.

The protein localises to the cell membrane. The chain is Dystrotelin (dytn) from Danio rerio (Zebrafish).